Reading from the N-terminus, the 709-residue chain is RxLR effector protein PITG_15110 (709 aa).

A signal peptide spans M1–G18. Positions R51–R66 match the RxLR-dEER motif.

The protein belongs to the RxLR effector family.

It localises to the secreted. It is found in the host cytoplasm. Its subcellular location is the host cytoskeleton. Functionally, effector that enhances P.infestans colonization of Nicotiana benthamiana leaves. In Phytophthora infestans (strain T30-4) (Potato late blight agent), this protein is RxLR effector protein PITG_15110.